The following is a 732-amino-acid chain: Photosystem I P700 chlorophyll a apoprotein A1 (732 aa).

Helical transmembrane passes span V61–A84, L145–H168, N185–L209, I278–A296, W317–Y340, L356–I382, I414–H436, and F510–M528. [4Fe-4S] cluster is bound by residues C552 and C561. Transmembrane regions (helical) follow at residues H568–W589 and L644–W666. H655 contributes to the chlorophyll a' binding site. M663 and Y671 together coordinate chlorophyll a. W672 serves as a coordination point for phylloquinone. The helical transmembrane segment at A704–A724 threads the bilayer.

It belongs to the PsaA/PsaB family. In terms of assembly, the PsaA/B heterodimer binds the P700 chlorophyll special pair and subsequent electron acceptors. PSI consists of a core antenna complex that captures photons, and an electron transfer chain that converts photonic excitation into a charge separation. The eukaryotic PSI reaction center is composed of at least 11 subunits. Requires P700 is a chlorophyll a/chlorophyll a' dimer, A0 is one or more chlorophyll a, A1 is one or both phylloquinones and FX is a shared 4Fe-4S iron-sulfur center. as cofactor.

Its subcellular location is the plastid. The protein localises to the chloroplast thylakoid membrane. It carries out the reaction reduced [plastocyanin] + hnu + oxidized [2Fe-2S]-[ferredoxin] = oxidized [plastocyanin] + reduced [2Fe-2S]-[ferredoxin]. Its function is as follows. PsaA and PsaB bind P700, the primary electron donor of photosystem I (PSI), as well as the electron acceptors A0, A1 and FX. PSI is a plastocyanin/cytochrome c6-ferredoxin oxidoreductase, converting photonic excitation into a charge separation, which transfers an electron from the donor P700 chlorophyll pair to the spectroscopically characterized acceptors A0, A1, FX, FA and FB in turn. Oxidized P700 is reduced on the lumenal side of the thylakoid membrane by plastocyanin or cytochrome c6. This Heterocapsa triquetra (Dinoflagellate) protein is Photosystem I P700 chlorophyll a apoprotein A1.